We begin with the raw amino-acid sequence, 418 residues long: Phosphoglycerate kinase (418 aa).

Residues 18–20 (DFN), arginine 34, 57–60 (HLGR), arginine 115, and arginine 171 contribute to the substrate site. Residues lysine 224, glycine 315, glutamate 346, and 375–378 (GGDS) contribute to the ATP site.

The protein belongs to the phosphoglycerate kinase family. As to quaternary structure, monomer.

Its subcellular location is the cytoplasm. It carries out the reaction (2R)-3-phosphoglycerate + ATP = (2R)-3-phospho-glyceroyl phosphate + ADP. It functions in the pathway carbohydrate degradation; glycolysis; pyruvate from D-glyceraldehyde 3-phosphate: step 2/5. The polypeptide is Phosphoglycerate kinase (Porphyromonas gingivalis (strain ATCC BAA-308 / W83)).